The sequence spans 92 residues: Alpha-conotoxin VxXXA (92 aa).

A signal peptide spans 1–24 (MPKLEMMLLVLLIFPLSYFIAAGG). The propeptide occupies 25 to 45 (QVVQVDRRGDGLAGYLQRGDR). A 4-hydroxyproline; partial mark is found at proline 55, proline 70, and proline 74. Disulfide bonds link cysteine 63–cysteine 72, cysteine 68–cysteine 80, cysteine 73–cysteine 90, and cysteine 78–cysteine 92.

It belongs to the conotoxin D superfamily. In terms of assembly, homodimer or pseudo-homodimer. Three dimers exist: homodimer of VxXXA, pseudo-homodimer of both VxXXA and [hydroxyPro-74]VxXXA and homodimer of [hydroxyPro-74]VxXXA. These three components exist in a 1:2:1 ratio. VxXXA stands for the form with the Pro-55 hydroxylated. A second major form has both Pro-55 and Pro-74 hydroxylated. The two major forms VxXXA and [hydroxyPro-74]VxXXA exist in a 1:1 ratio. In terms of processing, minor forms are [hydroxyPro-70,hydroxyPro-74]VxXXA and [Pro-55]VxXXA. Expressed by the venom duct.

It localises to the secreted. Alpha-conotoxins act on postsynaptic membranes, they bind to the nicotinic acetylcholine receptors (nAChR) and thus inhibit them. Through its two C-terminal domains, this homodimeric protein would bind to two nAChR allosteric sites, located outside the nAChR C-loop of the principal binding face and at the adjacent binding interface in a clockwise direction. This toxin specifically blocks mammalian neuronal nAChR of the alpha-7/CHRNA7, alpha-3-beta-2/CHRNA3-CHRNB2 (IC(50)=370 nM) and alpha-4-beta-2/CHRNA4-CHRNB2 subtypes. VxXXB inhibits alpha-7/CHRNA7 and alpha-3-beta-2/CHRNA3-CHRNB2 nAChR subtypes with the highest efficiency, followed by VxXXA and VxXXC. VxXXB and VxXXC inhibit the alpha-4-beta-2/CHRNA4-CHRNB2 nAChR subtype more efficiently than VxXXA. The chain is Alpha-conotoxin VxXXA from Conus vexillum (Flag cone).